Consider the following 348-residue polypeptide: Putative 4-hydroxythreonine-4-phosphate dehydrogenase 2 (348 aa).

The a divalent metal cation site is built by histidine 180, histidine 224, and histidine 279.

This sequence belongs to the PdxA family. Homodimer. Zn(2+) is required as a cofactor. It depends on Mg(2+) as a cofactor. Requires Co(2+) as cofactor.

The protein localises to the cytoplasm. It carries out the reaction 4-(phosphooxy)-L-threonine + NAD(+) = 3-amino-2-oxopropyl phosphate + CO2 + NADH. Its pathway is cofactor biosynthesis; pyridoxine 5'-phosphate biosynthesis; pyridoxine 5'-phosphate from D-erythrose 4-phosphate: step 4/5. Its function is as follows. Catalyzes the NAD(P)-dependent oxidation of 4-(phosphooxy)-L-threonine (HTP) into 2-amino-3-oxo-4-(phosphooxy)butyric acid which spontaneously decarboxylates to form 3-amino-2-oxopropyl phosphate (AHAP). The polypeptide is Putative 4-hydroxythreonine-4-phosphate dehydrogenase 2 (Rhizobium meliloti (strain 1021) (Ensifer meliloti)).